Here is a 424-residue protein sequence, read N- to C-terminus: Ankyrin repeat domain-containing protein 61 (424 aa).

ANK repeat units lie at residues leucine 80–alanine 109, glutamine 113–aspartate 169, histidine 172–alanine 201, serine 205–cysteine 234, threonine 239–alanine 278, aspartate 282–isoleucine 311, and asparagine 315–leucine 348.

In Bos taurus (Bovine), this protein is Ankyrin repeat domain-containing protein 61 (ANKRD61).